Here is a 246-residue protein sequence, read N- to C-terminus: Ubiquinone biosynthesis O-methyltransferase (246 aa).

Residues R44, G63, D84, and M128 each coordinate S-adenosyl-L-methionine.

It belongs to the methyltransferase superfamily. UbiG/COQ3 family.

The enzyme catalyses a 3-demethylubiquinol + S-adenosyl-L-methionine = a ubiquinol + S-adenosyl-L-homocysteine + H(+). The catalysed reaction is a 3-(all-trans-polyprenyl)benzene-1,2-diol + S-adenosyl-L-methionine = a 2-methoxy-6-(all-trans-polyprenyl)phenol + S-adenosyl-L-homocysteine + H(+). It participates in cofactor biosynthesis; ubiquinone biosynthesis. In terms of biological role, O-methyltransferase that catalyzes the 2 O-methylation steps in the ubiquinone biosynthetic pathway. This is Ubiquinone biosynthesis O-methyltransferase from Xylella fastidiosa (strain Temecula1 / ATCC 700964).